An 87-amino-acid polypeptide reads, in one-letter code: X protein (87 aa).

The segment at 5-16 (LRLTLLELVRRL) is nuclear export signal. Positions 18-87 (GNATIESGRL…PANRKGAAVE (70 aa)) are disordered. The segment covering 36–48 (DTTTGTTGVTKTT) has biased composition (low complexity).

As to quaternary structure, interacts with P and N proteins. These interactions presumably promote nuclear targeting of the X protein in infected cells. Interacts with host MAVS; this interaction inhibits MAVS-induced apoptosis. Phosphorylated.

It localises to the host nucleus. The protein resides in the host mitochondrion. Functionally, plays an essential role in the inhibition of host apoptosis. Mediates host mitochondria-mediated apoptosis through interaction with the mitochondrial antiviral signaling protein/MAVS and thereby promotes viral persistence in host central nervous system. Within the host nucleus, regulates viral RNA synthesis and polymerase complex assembly. The protein is X protein (P/X) of Borna disease virus 1 (BoDV-1).